Consider the following 220-residue polypeptide: uncharacterized protein (220 aa).

This is an uncharacterized protein from Methanocaldococcus jannaschii (strain ATCC 43067 / DSM 2661 / JAL-1 / JCM 10045 / NBRC 100440) (Methanococcus jannaschii).